The sequence spans 577 residues: Signal peptide peptidase-like 2B (577 aa).

An N-terminal signal peptide occupies residues 1–19 (MAAARLAASLLLLAAQVAC). Residues 20-168 (EFGVLRVVPQ…APSEPVMDYN (149 aa)) are Lumenal-facing. One can recognise a PA domain in the interval 49–149 (LPHDLNKVSL…RDLQDIFRRF (101 aa)). The N-linked (GlcNAc...) asparagine glycan is linked to asparagine 91. The chain crosses the membrane as a helical span at residues 169–189 (MVIIFIMAVGTVALGGYWAGS). Over 190-216 (HDVKKYMKHKRDDVPEKQEDEAVDVTP) the chain is Cytoplasmic. Residues 217 to 237 (VMICVFVVMCCFMLVLLYYFY) traverse the membrane as a helical segment. Over 238–239 (DR) the chain is Lumenal. A helical transmembrane segment spans residues 240-260 (LVYVIIGIFCLASSTGLYSCL). Residues 261–286 (APCVRKLPFCTCRVPDNNLPYFHKRP) lie on the Cytoplasmic side of the membrane. A helical membrane pass occupies residues 287-307 (QARMLLLALFCVTVSVVWGVF). Residues 308–312 (RNEDQ) are Lumenal-facing. A helical membrane pass occupies residues 313–333 (WAWVLQDTLGIAFCLYMLRTI). Topologically, residues 334-341 (RLPTFKAC) are cytoplasmic. A helical membrane pass occupies residues 342 to 362 (TLLLLVLFVYDIFFVFITPYL). Aspartate 352 is an active-site residue. Residues 363–405 (TKSGNSIMVEVATGPSNSSTHEKLPMVLKVPRLNTSPLSLCDR) lie on the Lumenal side of the membrane. A helical membrane pass occupies residues 406–426 (PFSLLGFGDILVPGLLVAYCH). Aspartate 414 is a catalytic residue. Residues 427-438 (RFDIQVQSSRIY) lie on the Cytoplasmic side of the membrane. The chain crosses the membrane as a helical span at residues 439 to 459 (FVACTIAYGLGLLVTFVALVL). Residues 460-463 (MRHG) lie on the Lumenal side of the membrane. A helical membrane pass occupies residues 464-484 (QPALLYLVPCTLLTSCTVALW). The PAL signature appears at 465–467 (PAL). Residues 485–577 (RREMGAFWTG…IPVVTPGTSA (93 aa)) are Cytoplasmic-facing. Positions 502–577 (QTPWAAPQGP…IPVVTPGTSA (76 aa)) are disordered.

Belongs to the peptidase A22B family. Monomer. Homodimer. Interacts with ITM2B and TNF. In terms of processing, glycosylated.

The protein resides in the cell membrane. The protein localises to the golgi apparatus membrane. Its subcellular location is the lysosome membrane. It localises to the endosome membrane. It is found in the membrane. In terms of biological role, intramembrane-cleaving aspartic protease (I-CLiP) that cleaves type II membrane signal peptides in the hydrophobic plane of the membrane. Functions in ITM2B and TNF processing. Catalyzes the intramembrane cleavage of the anchored fragment of shed TNF-alpha (TNF), which promotes the release of the intracellular domain (ICD) for signaling to the nucleus. May play a role in the regulation of innate and adaptive immunity. The sequence is that of Signal peptide peptidase-like 2B from Rattus norvegicus (Rat).